The sequence spans 344 residues: Centromere protein L (344 aa).

Ser39 bears the Phosphoserine mark. At Thr43 the chain carries Phosphothreonine. Ser53 bears the Phosphoserine mark.

This sequence belongs to the CENP-L/IML3 family. As to quaternary structure, component of the CENPA-CAD complex, composed of CENPI, CENPK, CENPL, CENPO, CENPP, CENPQ, CENPR and CENPS. The CENPA-CAD complex interacts with the CENPA-NAC complex, at least composed of CENPA, CENPC, CENPH, CENPM, CENPN, CENPT and CENPU.

The protein localises to the nucleus. It localises to the chromosome. It is found in the centromere. Component of the CENPA-CAD (nucleosome distal) complex, a complex recruited to centromeres which is involved in assembly of kinetochore proteins, mitotic progression and chromosome segregation. May be involved in incorporation of newly synthesized CENPA into centromeres via its interaction with the CENPA-NAC complex. In Homo sapiens (Human), this protein is Centromere protein L (CENPL).